The sequence spans 919 residues: Sarcosine dehydrogenase, mitochondrial (919 aa).

A mitochondrion-targeting transit peptide spans 1–22; it reads MASLSRVLRVAATCPRGRAAWN. K38 carries the N6-succinyllysine modification. The residue at position 109 (H109) is a Tele-8alpha-FAD histidine. K174 carries the N6-acetyllysine; alternate modification. K174 is subject to N6-succinyllysine; alternate. K278, K378, K392, and K535 each carry N6-succinyllysine. N6-acetyllysine occurs at positions 560 and 776. Phosphotyrosine is present on Y778. An N6-acetyllysine; alternate mark is found at K803, K885, and K905. K803, K885, and K905 each carry N6-succinyllysine; alternate.

The protein belongs to the GcvT family. Requires FAD as cofactor.

It localises to the mitochondrion matrix. The enzyme catalyses (6S)-5,6,7,8-tetrahydrofolyl-(gamma-L-Glu)(n) + sarcosine + oxidized [electron-transfer flavoprotein] + H(+) = (6R)-5,10-methylenetetrahydrofolyl-(gamma-L-Glu)(n) + reduced [electron-transfer flavoprotein] + glycine. The protein operates within amine and polyamine degradation; sarcosine degradation; formaldehyde and glycine from sarcosine: step 1/1. In terms of biological role, catalyzes the last step of the oxidative degradation of choline to glycine. Converts sarcosine into glycine. In Mus musculus (Mouse), this protein is Sarcosine dehydrogenase, mitochondrial.